The following is a 275-amino-acid chain: Undecaprenyl-diphosphatase (275 aa).

8 consecutive transmembrane segments (helical) span residues 4–24, 54–74, 92–112, 123–143, 154–174, 194–214, 228–248, and 255–275; these read IYGLVVALILGIVEGLTEFLP, LGSILAVIIICKQRWFLLFGL, LHLYHIILGLIPSSILGLMFY, YVMYSLILGSLLLLISQLIHD, ISYLQAFLIGCFQCFALLPGF, AFEFSFLLAVPMIFGATILDL, MFIIGFITAFLVALITIKLFW, and SFIPFVLYRFLLVIVFYLILI.

The protein belongs to the UppP family.

It is found in the cell membrane. The enzyme catalyses di-trans,octa-cis-undecaprenyl diphosphate + H2O = di-trans,octa-cis-undecaprenyl phosphate + phosphate + H(+). Catalyzes the dephosphorylation of undecaprenyl diphosphate (UPP). Confers resistance to bacitracin. This Baumannia cicadellinicola subsp. Homalodisca coagulata protein is Undecaprenyl-diphosphatase.